The following is a 706-amino-acid chain: Methionine--tRNA ligase (706 aa).

Residues 13–23 carry the 'HIGH' region motif; the sequence is PYANGNFHIGH. Positions 144, 147, 157, and 160 each coordinate Zn(2+). The 'KMSKS' region motif lies at 341–345; the sequence is KMSKS. Lys344 is a binding site for ATP. In terms of domain architecture, tRNA-binding spans 600-706; sequence DFAKIDLRIA…PGATPGMRVR (107 aa).

It belongs to the class-I aminoacyl-tRNA synthetase family. MetG type 1 subfamily. Homodimer. Zn(2+) serves as cofactor.

It is found in the cytoplasm. The catalysed reaction is tRNA(Met) + L-methionine + ATP = L-methionyl-tRNA(Met) + AMP + diphosphate. Its function is as follows. Is required not only for elongation of protein synthesis but also for the initiation of all mRNA translation through initiator tRNA(fMet) aminoacylation. The protein is Methionine--tRNA ligase of Paracidovorax citrulli (strain AAC00-1) (Acidovorax citrulli).